Consider the following 124-residue polypeptide: CLAVATA3/ESR (CLE)-related protein 45 (124 aa).

Residues 1 to 20 form the signal peptide; that stretch reads MLGSSTRSMFFLLVCIGLLA. 2 N-linked (GlcNAc...) asparagine glycosylation sites follow: Asn25 and Asn96. The stretch at 71 to 109 forms a coiled coil; the sequence is LNKNRRVLEEVNKDKIKAEETQERKNKTEDSFKSSKRRV. The segment covering 87 to 103 has biased composition (basic and acidic residues); it reads KAEETQERKNKTEDSFK. Positions 87–124 are disordered; the sequence is KAEETQERKNKTEDSFKSSKRRVRRGSDPIHNKAQPFS.

The protein belongs to the CLV3/ESR signal peptide family. In terms of assembly, binds to SKM1 present in the pollen grain, particularly under relatively high temperature (at 30 degrees Celsius). Interacts with BAM3, especially in roots. As to expression, expressed at low levels in flowers, especially in pistils. Present in vascular tissues. In roots, confined to protophloem and sieve element precursor cells.

It is found in the secreted. The protein resides in the extracellular space. Functionally, extracellular signal peptide that regulates cell fate. Represses root apical meristem maintenance. Represses protophloem differentiation in a BAM3-dependent manner. BRX, BAM3, and CLE45 act together to regulate the transition of protophloem cells from proliferation to differentiation, thus impinging on postembryonic growth capacity of the root meristem; this signaling pathway requires CRN and CLV2 and involves MAKR5 for its transduction/amplification. Triggers the accumulation of MAKR5 in developing sieve elements in a BAM3-dependent manner. Prevents, in a dose-dependent manner, auxin response in the root meristem thus leading in the repression of protophloem differentiation and periclinal sieve element precursor cell division. Promotes pollen tube growth prolongation in a SKM1 and SKM2-dependent manner, especially under relatively high temperature (at 30 degrees Celsius), thus conferring tolerance against high temperature probably through the maintenance of mitochondrial activity. Alleviates mitochondrial decay pollen tube in vitro culture. The polypeptide is CLAVATA3/ESR (CLE)-related protein 45 (Arabidopsis thaliana (Mouse-ear cress)).